The following is a 370-amino-acid chain: Queuine tRNA-ribosyltransferase (370 aa).

Asp89 functions as the Proton acceptor in the catalytic mechanism. Residues 89–93, Asp143, and Gly214 each bind substrate; that span reads DSGGF. The tract at residues 245 to 251 is RNA binding; that stretch reads GVGKPED. The active-site Nucleophile is Asp264. Residues 269–273 are RNA binding; important for wobble base 34 recognition; sequence TRNAR. Zn(2+) is bound by residues Cys302, Cys304, Cys307, and His333.

It belongs to the queuine tRNA-ribosyltransferase family. As to quaternary structure, homodimer. Within each dimer, one monomer is responsible for RNA recognition and catalysis, while the other monomer binds to the replacement base PreQ1. Zn(2+) serves as cofactor.

It carries out the reaction 7-aminomethyl-7-carbaguanine + guanosine(34) in tRNA = 7-aminomethyl-7-carbaguanosine(34) in tRNA + guanine. Its pathway is tRNA modification; tRNA-queuosine biosynthesis. In terms of biological role, catalyzes the base-exchange of a guanine (G) residue with the queuine precursor 7-aminomethyl-7-deazaguanine (PreQ1) at position 34 (anticodon wobble position) in tRNAs with GU(N) anticodons (tRNA-Asp, -Asn, -His and -Tyr). Catalysis occurs through a double-displacement mechanism. The nucleophile active site attacks the C1' of nucleotide 34 to detach the guanine base from the RNA, forming a covalent enzyme-RNA intermediate. The proton acceptor active site deprotonates the incoming PreQ1, allowing a nucleophilic attack on the C1' of the ribose to form the product. After dissociation, two additional enzymatic reactions on the tRNA convert PreQ1 to queuine (Q), resulting in the hypermodified nucleoside queuosine (7-(((4,5-cis-dihydroxy-2-cyclopenten-1-yl)amino)methyl)-7-deazaguanosine). This is Queuine tRNA-ribosyltransferase from Buchnera aphidicola subsp. Acyrthosiphon pisum (strain APS) (Acyrthosiphon pisum symbiotic bacterium).